Reading from the N-terminus, the 510-residue chain is ATP synthase subunit alpha (510 aa).

Position 169–176 (169–176) interacts with ATP; that stretch reads GDRQTGKT.

The protein belongs to the ATPase alpha/beta chains family. As to quaternary structure, F-type ATPases have 2 components, CF(1) - the catalytic core - and CF(0) - the membrane proton channel. CF(1) has five subunits: alpha(3), beta(3), gamma(1), delta(1), epsilon(1). CF(0) has three main subunits: a(1), b(2) and c(9-12). The alpha and beta chains form an alternating ring which encloses part of the gamma chain. CF(1) is attached to CF(0) by a central stalk formed by the gamma and epsilon chains, while a peripheral stalk is formed by the delta and b chains.

It localises to the cell inner membrane. It carries out the reaction ATP + H2O + 4 H(+)(in) = ADP + phosphate + 5 H(+)(out). Its function is as follows. Produces ATP from ADP in the presence of a proton gradient across the membrane. The alpha chain is a regulatory subunit. The polypeptide is ATP synthase subunit alpha (Methylobacterium radiotolerans (strain ATCC 27329 / DSM 1819 / JCM 2831 / NBRC 15690 / NCIMB 10815 / 0-1)).